A 226-amino-acid chain; its full sequence is Urease accessory protein UreE (226 aa).

The interval 192–226 (PHGSGLHIHSIHSHGDGHSHDHDHSHGDHDSDHKH) is disordered. Positions 204–226 (SHGDGHSHDHDHSHGDHDSDHKH) are enriched in basic and acidic residues.

This sequence belongs to the UreE family.

Its subcellular location is the cytoplasm. Its function is as follows. Involved in urease metallocenter assembly. Binds nickel. Probably functions as a nickel donor during metallocenter assembly. This is Urease accessory protein UreE from Yersinia intermedia.